We begin with the raw amino-acid sequence, 231 residues long: Large ribosomal subunit protein uL1 (231 aa).

Belongs to the universal ribosomal protein uL1 family. As to quaternary structure, part of the 50S ribosomal subunit.

Its function is as follows. Binds directly to 23S rRNA. The L1 stalk is quite mobile in the ribosome, and is involved in E site tRNA release. In terms of biological role, protein L1 is also a translational repressor protein, it controls the translation of the L11 operon by binding to its mRNA. This is Large ribosomal subunit protein uL1 from Polaromonas sp. (strain JS666 / ATCC BAA-500).